We begin with the raw amino-acid sequence, 308 residues long: Probable manganese-dependent inorganic pyrophosphatase (308 aa).

6 residues coordinate Mn(2+): histidine 9, aspartate 13, aspartate 15, aspartate 75, histidine 97, and aspartate 149.

Belongs to the PPase class C family. Mn(2+) is required as a cofactor.

Its subcellular location is the cytoplasm. The enzyme catalyses diphosphate + H2O = 2 phosphate + H(+). The sequence is that of Probable manganese-dependent inorganic pyrophosphatase from Listeria welshimeri serovar 6b (strain ATCC 35897 / DSM 20650 / CCUG 15529 / CIP 8149 / NCTC 11857 / SLCC 5334 / V8).